The following is a 75-amino-acid chain: Small, acid-soluble spore protein Tlp (75 aa).

It belongs to the Tlp family.

Its subcellular location is the spore core. In Geobacillus thermodenitrificans (strain NG80-2), this protein is Small, acid-soluble spore protein Tlp.